Reading from the N-terminus, the 341-residue chain is NADH-ubiquinone oxidoreductase chain 2 (341 aa).

10 consecutive transmembrane segments (helical) span residues 8 to 28 (ILFTTIMIIGTLITVTSNSWL), 61 to 81 (FLTQALASTVLLFSSILLMLA), 95 to 115 (MIIMSALLLKSGAAPFHFWFP), 121 to 141 (LTWMNALMLMTWQKIAPLMLI), 146 to 166 (IKNLLLISVILSVIIGAIGGL), 174 to 194 (LMAFSSINHLGWMLSSLMISE), 195 to 215 (SIWLIYFIFYSFLSFVLTFMF), 238 to 258 (FSLFMNFLSLGGLPPFLGFLP), 273 to 293 (FLLTLMMMSTLITLFFYLRIC), and 321 to 341 (LIMTFFSIFGLFLISLFFFML).

This sequence belongs to the complex I subunit 2 family.

The protein localises to the mitochondrion inner membrane. It catalyses the reaction a ubiquinone + NADH + 5 H(+)(in) = a ubiquinol + NAD(+) + 4 H(+)(out). Functionally, core subunit of the mitochondrial membrane respiratory chain NADH dehydrogenase (Complex I) that is believed to belong to the minimal assembly required for catalysis. Complex I functions in the transfer of electrons from NADH to the respiratory chain. The immediate electron acceptor for the enzyme is believed to be ubiquinone. The polypeptide is NADH-ubiquinone oxidoreductase chain 2 (mt:ND2) (Drosophila yakuba (Fruit fly)).